A 284-amino-acid chain; its full sequence is Bifunctional protein FolD (284 aa).

NADP(+)-binding positions include 165 to 167 (GAS), I190, and I231.

Belongs to the tetrahydrofolate dehydrogenase/cyclohydrolase family. Homodimer.

It carries out the reaction (6R)-5,10-methylene-5,6,7,8-tetrahydrofolate + NADP(+) = (6R)-5,10-methenyltetrahydrofolate + NADPH. The catalysed reaction is (6R)-5,10-methenyltetrahydrofolate + H2O = (6R)-10-formyltetrahydrofolate + H(+). Its pathway is one-carbon metabolism; tetrahydrofolate interconversion. Its function is as follows. Catalyzes the oxidation of 5,10-methylenetetrahydrofolate to 5,10-methenyltetrahydrofolate and then the hydrolysis of 5,10-methenyltetrahydrofolate to 10-formyltetrahydrofolate. The polypeptide is Bifunctional protein FolD (Alkaliphilus metalliredigens (strain QYMF)).